The following is a 705-amino-acid chain: UvrABC system protein C (705 aa).

One can recognise a GIY-YIG domain in the interval 16-95 (ETPGVYRFRD…IKQFDPRFNV (80 aa)). The 36-residue stretch at 208–243 (GRYLRRLEREMQQAAQAQEYERAARLRDDIGALRRA) folds into the UVR domain. A compositionally biased stretch (low complexity) spans 315–332 (AASTGTAGSTVPTTTAGS). Disordered regions lie at residues 315–335 (AAST…SQGE) and 683–705 (RADA…ETVS).

This sequence belongs to the UvrC family. As to quaternary structure, interacts with UvrB in an incision complex.

Its subcellular location is the cytoplasm. The UvrABC repair system catalyzes the recognition and processing of DNA lesions. UvrC both incises the 5' and 3' sides of the lesion. The N-terminal half is responsible for the 3' incision and the C-terminal half is responsible for the 5' incision. The protein is UvrABC system protein C of Frankia casuarinae (strain DSM 45818 / CECT 9043 / HFP020203 / CcI3).